A 136-amino-acid polypeptide reads, in one-letter code: Putative pre-16S rRNA nuclease (136 aa).

It belongs to the YqgF nuclease family.

It localises to the cytoplasm. Functionally, could be a nuclease involved in processing of the 5'-end of pre-16S rRNA. This is Putative pre-16S rRNA nuclease from Francisella tularensis subsp. holarctica (strain FTNF002-00 / FTA).